A 55-amino-acid chain; its full sequence is uncharacterized protein (55 aa).

The protein localises to the plastid. This is an uncharacterized protein from Cuscuta reflexa (Southern Asian dodder).